A 206-amino-acid polypeptide reads, in one-letter code: Alpha-1-acid glycoprotein 3 (206 aa).

The first 18 residues, 1 to 18 (MELHTVLIMLSLLPLLEA), serve as a signal peptide directing secretion. N-linked (GlcNAc...) asparagine glycans are attached at residues N33, N75, and N103. A disulfide bridge connects residues C90 and C183. The disordered stretch occupies residues 187-206 (EKKHLELEKETKKDPEESQA).

It belongs to the calycin superfamily. Lipocalin family.

It is found in the secreted. Functionally, functions as a transport protein in the blood stream. Binds various ligands in the interior of its beta-barrel domain. Appears to function in modulating the activity of the immune system during the acute-phase reaction. This Mus musculus (Mouse) protein is Alpha-1-acid glycoprotein 3 (Orm3).